The chain runs to 274 residues: Hydroxyethylthiazole kinase (274 aa).

Methionine 49 contacts substrate. Positions 125 and 173 each coordinate ATP. Substrate is bound at residue glycine 200.

Belongs to the Thz kinase family. Requires Mg(2+) as cofactor.

The enzyme catalyses 5-(2-hydroxyethyl)-4-methylthiazole + ATP = 4-methyl-5-(2-phosphooxyethyl)-thiazole + ADP + H(+). It participates in cofactor biosynthesis; thiamine diphosphate biosynthesis; 4-methyl-5-(2-phosphoethyl)-thiazole from 5-(2-hydroxyethyl)-4-methylthiazole: step 1/1. In terms of biological role, catalyzes the phosphorylation of the hydroxyl group of 4-methyl-5-beta-hydroxyethylthiazole (THZ). The polypeptide is Hydroxyethylthiazole kinase (Desulfosudis oleivorans (strain DSM 6200 / JCM 39069 / Hxd3) (Desulfococcus oleovorans)).